The sequence spans 331 residues: MASLKNKHFMIGLTLTFIVALFSFLAAKLPILDKVGALTIAILIAILYRHFRGYPEQYSSGITFSSKYLLRFAIILYGLKLNIFDIIGQGSRLLAIDVGVVIFSIVMMLFVNKLLHGDKNIALLLGVGTGVCGAAAIAAVAPIFKSREKDTAISIGIIALIGTIFSLIYTAIYAIFSMTTNVYGAWSGVSLHEIAHVVLAGGFGGSDALKIALLGKLGRVFLLIPLTIVLILIMRFRSSESSSNGRISIPYFLIGFVIMALVNTYVTIPSALLNILNTVSTICLLMAMVALGLNVAFKDLKNRALKPLMTIIITSICLSSLAFIVVHWLYS.

11 consecutive transmembrane segments (helical) span residues 9–26, 31–48, 69–88, 93–115, 122–144, 154–176, 183–202, 217–234, 247–269, 273–295, and 308–330; these read FMIG…SFLA, ILDK…AILY, LLRF…DIIG, LLAI…NKLL, ALLL…APIF, SIGI…YAIF, YGAW…LAGG, LGRV…ILIM, ISIP…VTIP, LNIL…GLNV, and LMTI…HWLY.

It belongs to the UPF0324 family.

Its subcellular location is the cell membrane. This is UPF0324 membrane protein SAS0317 from Staphylococcus aureus (strain MSSA476).